A 216-amino-acid chain; its full sequence is 3,4-dihydroxy-2-butanone 4-phosphate synthase (216 aa).

Residues 33 to 34 (RE), Asp-38, 146 to 150 (RRGHT), and Glu-170 each bind D-ribulose 5-phosphate. Residue Glu-34 participates in Mg(2+) binding. Position 149 (His-149) interacts with Mg(2+).

It belongs to the DHBP synthase family. Homodimer. It depends on Mg(2+) as a cofactor. Requires Mn(2+) as cofactor.

The enzyme catalyses D-ribulose 5-phosphate = (2S)-2-hydroxy-3-oxobutyl phosphate + formate + H(+). Its pathway is cofactor biosynthesis; riboflavin biosynthesis; 2-hydroxy-3-oxobutyl phosphate from D-ribulose 5-phosphate: step 1/1. Catalyzes the conversion of D-ribulose 5-phosphate to formate and 3,4-dihydroxy-2-butanone 4-phosphate. The chain is 3,4-dihydroxy-2-butanone 4-phosphate synthase from Pseudomonas putida (strain ATCC 47054 / DSM 6125 / CFBP 8728 / NCIMB 11950 / KT2440).